The primary structure comprises 1401 residues: MAP kinase kinase kinase wis4 (1401 aa).

Disordered stretches follow at residues 67 to 99 (HIPLTPSHSGQSEKLMSTRTSHSPYISPTMSYT) and 176 to 205 (QDSISDKSLPSTNQSLHHSEEDTESDNDFS). 2 stretches are compositionally biased toward polar residues: residues 72-99 (PSHSGQSEKLMSTRTSHSPYISPTMSYT) and 176-191 (QDSISDKSLPSTNQSL). The region spanning 1037-1306 (WQQGHFVRSG…AVDLLTHPWI (270 aa)) is the Protein kinase domain. ATP is bound by residues 1043–1051 (VRSGMFGDV) and K1066. Residue D1161 is the Proton acceptor of the active site.

The protein belongs to the protein kinase superfamily. STE Ser/Thr protein kinase family. MAP kinase kinase kinase subfamily.

The enzyme catalyses L-seryl-[protein] + ATP = O-phospho-L-seryl-[protein] + ADP + H(+). It carries out the reaction L-threonyl-[protein] + ATP = O-phospho-L-threonyl-[protein] + ADP + H(+). In terms of biological role, involved in a signal transduction pathway that is activated in under conditions of heat shock, oxidative stress or limited nutrition. Unlike win1, it is not activated by changes in the osmolarity of the extracellular environment. Activates the wis1 MAP kinase kinase by phosphorylation. This chain is MAP kinase kinase kinase wis4 (wis4), found in Schizosaccharomyces pombe (strain 972 / ATCC 24843) (Fission yeast).